Consider the following 314-residue polypeptide: Taste receptor type 2 member 42 (314 aa).

Over 1 to 7 (MATELDK) the chain is Extracellular. A helical transmembrane segment spans residues 8 to 28 (IFLILEIAEFIIGMLGNVFIG). The Cytoplasmic segment spans residues 29 to 50 (LVNCSEGIKNQKVFSADFILTC). A helical membrane pass occupies residues 51-71 (LAISTIGQLFVILFDSFLVGL). At 72–101 (ASHLYTTYRLGKPVIMLWHMTNHLTTWLAT) the chain is on the extracellular side. Residues 102–122 (CLSIFYFFKIAHFPHSLFLWL) traverse the membrane as a helical segment. The Cytoplasmic portion of the chain corresponds to 123–127 (RWRMN). The helical transmembrane segment at 128–148 (GMIVMLLILSLFLLIFNSLVL) threads the bilayer. Residues 149–187 (EIFIDISLNIIDKSNLTLYLDESKTVYDKLSILKTLLSL) are Extracellular-facing. Asparagine 163 carries N-linked (GlcNAc...) asparagine glycosylation. A helical membrane pass occupies residues 188-208 (TSFIPFSLSLTSLLFLFLSLV). The Cytoplasmic portion of the chain corresponds to 209–238 (RHTRNLKLSSLGSRDSSTEAHRRAMKMVMS). Residues 239 to 259 (FLFLFIVHFFSLQVANWIFFM) traverse the membrane as a helical segment. Topologically, residues 260 to 265 (LWNNKY) are extracellular. The helical transmembrane segment at 266 to 286 (IKFAMLALNAFPSCHSFILIL) threads the bilayer. The Cytoplasmic segment spans residues 287-314 (GNSKLRQTAVRLLWHLRNYTKTPNPLPL).

The protein belongs to the G-protein coupled receptor T2R family.

The protein localises to the membrane. Its function is as follows. Receptor that may play a role in the perception of bitterness and is gustducin-linked. May play a role in sensing the chemical composition of the gastrointestinal content. The activity of this receptor may stimulate alpha gustducin, mediate PLC-beta-2 activation and lead to the gating of TRPM5. The chain is Taste receptor type 2 member 42 (TAS2R42) from Pan troglodytes (Chimpanzee).